Consider the following 202-residue polypeptide: uncharacterized protein (202 aa).

The tract at residues M1 to P20 is disordered. The HTH tetR-type domain maps to S19–V79.

This is an uncharacterized protein from Mycobacterium bovis (strain ATCC BAA-935 / AF2122/97).